Consider the following 33-residue polypeptide: Photosystem II reaction center protein Psb30 (33 aa).

A helical transmembrane segment spans residues 5 to 25; sequence LIVQLGSLTLITIAGPLIVAL.

This sequence belongs to the Psb30/Ycf12 family. As to quaternary structure, PSII is composed of 1 copy each of membrane proteins PsbA, PsbB, PsbC, PsbD, PsbE, PsbF, PsbH, PsbI, PsbJ, PsbK, PsbL, PsbM, PsbT, PsbY, PsbZ, Psb30/Ycf12, peripheral proteins of the oxygen-evolving complex and a large number of cofactors. It forms dimeric complexes.

The protein localises to the plastid. Its subcellular location is the chloroplast thylakoid membrane. In terms of biological role, a core subunit of photosystem II (PSII), probably helps stabilize the reaction center. The chain is Photosystem II reaction center protein Psb30 from Euglena mutabilis.